A 348-amino-acid chain; its full sequence is RNA 3'-terminal phosphate cyclase (348 aa).

Residues Gln-107 and His-290 to Gln-294 each bind ATP. His-316 serves as the catalytic Tele-AMP-histidine intermediate.

Belongs to the RNA 3'-terminal cyclase family. Type 1 subfamily.

The protein localises to the cytoplasm. The enzyme catalyses a 3'-end 3'-phospho-ribonucleotide-RNA + ATP = a 3'-end 2',3'-cyclophospho-ribonucleotide-RNA + AMP + diphosphate. Its function is as follows. Catalyzes the conversion of 3'-phosphate to a 2',3'-cyclic phosphodiester at the end of RNA. The mechanism of action of the enzyme occurs in 3 steps: (A) adenylation of the enzyme by ATP; (B) transfer of adenylate to an RNA-N3'P to produce RNA-N3'PP5'A; (C) and attack of the adjacent 2'-hydroxyl on the 3'-phosphorus in the diester linkage to produce the cyclic end product. The biological role of this enzyme is unknown but it is likely to function in some aspects of cellular RNA processing. In Nostoc punctiforme (strain ATCC 29133 / PCC 73102), this protein is RNA 3'-terminal phosphate cyclase.